The following is a 797-amino-acid chain: MKEGRKRLRAGYCYMLAGVVGVASTGSSRADSEPQSAAMLDWRMREFLTPQQMTTLEPQCRGTYVEPEYGFVNAPSTTSTPDNEALRARSDTLVSPSESAMRLQGNVKAQQGAWWLEADQVELDRQTNVVDLQGLKAARAPGLLLHGDTARYNLDTKDFSLSDASYLIHQRHARGDAERISSADAQLVRIEDGSYTTCDPTHNDWSIAASEIILDREQGEGAAKHMTLRIKDVPVMYFPYLRFPIDDRRKSGFLYPTIGTSNTGRGMSFGIPYYFNLAPNYDATYSPLYMHGRGLLSELEGRWLTEDTYSEVRLGYIAHDSEFSKENPDESGRRWALDFTNRYDVSENWRSTIDYNVVSDKDYLNDLNRTLEIQQETHIKRSWDVAYLGGGFSFKSHVQGYQTVDDDIVDNDRPYMLLPQLSFGWERDFDPVAFGLESEFTYFWRDDENLDPARDQQVVGARWRTQPSLTLPLSTTWGYLTPKLRLDHTDYQLEQRVTGLDESISRTVPFYSLDAGMYFDRTLSLFGDEYNQSLEPRLFYVYSPEQDQDDIPDFDTSVATFSYSQLYKEDRFVGGDRVGDNNRLTLGVTSRFNDRATGAERLRASVGQIFYYEDQQVGLGTEGLSDESESPWAGELVWRPNDRFDFKVEGLWDWQERQTEKGATTLAFHDPEYRKLLNLSHRYTHNDLEQTDVSVLFPVTDSVSVLGRWFFDLVNHRTIGTMAGVEYNDCCWRFQVIARSFLKDADDTENSELDHGVFLRFQLRGLGNIGSRFEDVMAKEMRNFNERETYRAERYQW.

An N-terminal signal peptide occupies residues 1-30; sequence MKEGRKRLRAGYCYMLAGVVGVASTGSSRA.

Belongs to the LptD family. Component of the lipopolysaccharide transport and assembly complex. Interacts with LptE and LptA.

The protein localises to the cell outer membrane. Together with LptE, is involved in the assembly of lipopolysaccharide (LPS) at the surface of the outer membrane. The polypeptide is LPS-assembly protein LptD (Hahella chejuensis (strain KCTC 2396)).